Reading from the N-terminus, the 320-residue chain is 1-aminocyclopropane-1-carboxylate oxidase 3 (320 aa).

Residues 111 to 131 (NEYRLAMKDFGKRLEILAEEL) adopt a coiled-coil conformation. Positions 155-256 (GPTFATKLSN…RMSIASFYNP (102 aa)) constitute a Fe2OG dioxygenase domain. Fe cation is bound by residues H180, D182, and H237. R247 is a binding site for 2-oxoglutarate.

The protein belongs to the iron/ascorbate-dependent oxidoreductase family. The cofactor is Fe(2+).

It catalyses the reaction 1-aminocyclopropane-1-carboxylate + L-ascorbate + O2 = ethene + L-dehydroascorbate + hydrogen cyanide + CO2 + 2 H2O. The protein operates within alkene biosynthesis; ethylene biosynthesis via S-adenosyl-L-methionine; ethylene from S-adenosyl-L-methionine: step 2/2. Its function is as follows. Enzyme involved in the ethylene biosynthesis. May promote stem elongation by maximizing the extensibility cells, possibly by activating ethylene biosynthesis, in response to very-long-chain fatty acids (VLCFAs C20:0 to C30:0). This is 1-aminocyclopropane-1-carboxylate oxidase 3 from Arabidopsis thaliana (Mouse-ear cress).